The following is a 153-amino-acid chain: Myoglobin (153 aa).

Residues 2–147 (GLNDQEWQQV…FRNDMASKYK (146 aa)) form the Globin domain. A nitrite-binding site is contributed by His-65. His-65 serves as a coordination point for O2. Residue His-93 participates in heme b binding.

Belongs to the globin family. As to quaternary structure, monomeric.

The protein localises to the cytoplasm. It localises to the sarcoplasm. The catalysed reaction is Fe(III)-heme b-[protein] + nitric oxide + H2O = Fe(II)-heme b-[protein] + nitrite + 2 H(+). It carries out the reaction H2O2 + AH2 = A + 2 H2O. Its function is as follows. Monomeric heme protein which primary function is to store oxygen and facilitate its diffusion within muscle tissues. Reversibly binds oxygen through a pentacoordinated heme iron and enables its timely and efficient release as needed during periods of heightened demand. Depending on the oxidative conditions of tissues and cells, and in addition to its ability to bind oxygen, it also has a nitrite reductase activity whereby it regulates the production of bioactive nitric oxide. Under stress conditions, like hypoxia and anoxia, it also protects cells against reactive oxygen species thanks to its pseudoperoxidase activity. This Aptenodytes forsteri (Emperor penguin) protein is Myoglobin (MB).